Consider the following 123-residue polypeptide: Large ribosomal subunit protein uL14 (123 aa).

The protein belongs to the universal ribosomal protein uL14 family. Part of the 50S ribosomal subunit. Forms a cluster with proteins L3 and L19. In the 70S ribosome, L14 and L19 interact and together make contacts with the 16S rRNA in bridges B5 and B8.

Its function is as follows. Binds to 23S rRNA. Forms part of two intersubunit bridges in the 70S ribosome. The sequence is that of Large ribosomal subunit protein uL14 from Aliivibrio salmonicida (strain LFI1238) (Vibrio salmonicida (strain LFI1238)).